Consider the following 716-residue polypeptide: Lamin-like protein (716 aa).

Composition is skewed to basic residues over residues 1-10 and 35-45; these read MDMSKKKSKR and KKTKTTTKKKA. The tract at residues 1 to 107 is disordered; it reads MDMSKKKSKR…TIQSIPTTPI (107 aa). A compositionally biased stretch (low complexity) spans 62–107; sequence ITTTTTSTSTTNNNNITTTSTSSQQSNGTLSSSSSPTIQSIPTTPI. The stretch at 130–450 forms a coiled coil; the sequence is LREKDELSLI…KMRKQMADLK (321 aa). Residues 132–515 form the IF rod domain; that stretch reads EKDELSLIHN…ELVKGFEKTV (384 aa). Residues 519–522 carry the Nuclear localization signal motif; that stretch reads KRKR. The segment at 519 to 584 is disordered; that stretch reads KRKRSKLQHE…PTGPEQSELF (66 aa). A compositionally biased stretch (polar residues) spans 532–545; sequence AANQDQNGMTIEEQ. The span at 546–564 shows a compositional bias: low complexity; the sequence is SSTSTTTTTSATGSSSSTS. A compositionally biased stretch (polar residues) spans 565 to 584; the sequence is HLDNIDSSKLPTGPEQSELF. One can recognise an LTD domain in the interval 575 to 698; the sequence is PTGPEQSELF…EETTTVTLPA (124 aa). The CAAX motif motif lies at 713 to 716; sequence CLIM.

It belongs to the intermediate filament family. Homodimer. Lamin dimers then assemble into dimeric head-to-tail polymers. Ultimately, two head-to-tail polymers assemble laterally into a protofilament with a uniformly shaped rod of 3.5 nm in diameter.

It localises to the nucleus lamina. It is found in the nucleus envelope. The protein resides in the nucleus inner membrane. Functionally, lamins are intermediate filament proteins that assemble into a filamentous meshwork, and which constitute the major components of the nuclear lamina, a fibrous layer on the nucleoplasmic side of the inner nuclear membrane. Lamins provide a framework for the nuclear envelope, bridging the nuclear envelope and chromatin, thereby playing an important role in nuclear assembly, chromatin organization, nuclear membrane and telomere dynamics. The structural integrity of the lamina is strictly controlled by the cell cycle, as seen by the disintegration and formation of the nuclear envelope in prophase and telophase, respectively. Helps to maintain integrity of nuclear structures in response to mechanical stress. This Dictyostelium discoideum (Social amoeba) protein is Lamin-like protein.